Reading from the N-terminus, the 155-residue chain is Small ribosomal subunit protein uS7 (155 aa).

Belongs to the universal ribosomal protein uS7 family. In terms of assembly, part of the 30S ribosomal subunit. Contacts proteins S9 and S11.

Its function is as follows. One of the primary rRNA binding proteins, it binds directly to 16S rRNA where it nucleates assembly of the head domain of the 30S subunit. Is located at the subunit interface close to the decoding center, probably blocks exit of the E-site tRNA. This is Small ribosomal subunit protein uS7 from Xanthomonas axonopodis pv. citri (strain 306).